We begin with the raw amino-acid sequence, 592 residues long: Craniofacial development protein 2 (592 aa).

The segment covering 1 to 16 (MEEFDSKDISTSKDED) has biased composition (basic and acidic residues). Disordered regions lie at residues 1 to 225 (MEEF…KGQS) and 499 to 592 (VTNE…DCNN). Over residues 25–42 (HEDDINELVKEDEVDGEE) the composition is skewed to acidic residues. 2 stretches are compositionally biased toward basic and acidic residues: residues 78–108 (SRES…RQEE) and 147–162 (KVEE…EVKL). The segment covering 175–184 (LTQQGRLSGR) has biased composition (polar residues). Basic and acidic residues-rich tracts occupy residues 185–207 (TSED…RRAD), 508–523 (EEAK…EKPE), 552–562 (SVFKQDEKDKP), and 580–592 (EKCD…DCNN). Residues 499-578 (VTNEEDATNE…SVPSLPAGSG (80 aa)) form a hydrophilic region.

Phosphorylated by CK2 (casein kinase II) in vitro. Expressed in liver and lung with higher expression in brain.

Its subcellular location is the cytoplasm. The protein localises to the nucleus. This Bos taurus (Bovine) protein is Craniofacial development protein 2 (CFDP2).